The sequence spans 100 residues: Small ribosomal subunit protein uS14c (100 aa).

A disordered region spans residues Met-1–Ser-54.

Belongs to the universal ribosomal protein uS14 family. In terms of assembly, part of the 30S ribosomal subunit.

The protein localises to the plastid. The protein resides in the chloroplast. Functionally, binds 16S rRNA, required for the assembly of 30S particles. The protein is Small ribosomal subunit protein uS14c of Piper cenocladum (Ant piper).